The primary structure comprises 368 residues: Glutamate 5-kinase (368 aa).

Lysine 13 serves as a coordination point for ATP. The substrate site is built by serine 54, aspartate 141, and asparagine 153. An ATP-binding site is contributed by 173-174 (SD). Residues 278 to 355 (RGEITVDAGA…AEIEAVLGYP (78 aa)) form the PUA domain.

Belongs to the glutamate 5-kinase family.

The protein localises to the cytoplasm. It carries out the reaction L-glutamate + ATP = L-glutamyl 5-phosphate + ADP. Its pathway is amino-acid biosynthesis; L-proline biosynthesis; L-glutamate 5-semialdehyde from L-glutamate: step 1/2. In terms of biological role, catalyzes the transfer of a phosphate group to glutamate to form L-glutamate 5-phosphate. In Dinoroseobacter shibae (strain DSM 16493 / NCIMB 14021 / DFL 12), this protein is Glutamate 5-kinase.